The following is a 254-amino-acid chain: Triosephosphate isomerase (254 aa).

12 to 14 (NWK) contacts substrate. His99 acts as the Electrophile in catalysis. Residue Glu169 is the Proton acceptor of the active site. Residues Gly175, Ser214, and 235 to 236 (GG) contribute to the substrate site.

This sequence belongs to the triosephosphate isomerase family. In terms of assembly, homodimer.

The protein localises to the cytoplasm. The enzyme catalyses D-glyceraldehyde 3-phosphate = dihydroxyacetone phosphate. The protein operates within carbohydrate biosynthesis; gluconeogenesis. It functions in the pathway carbohydrate degradation; glycolysis; D-glyceraldehyde 3-phosphate from glycerone phosphate: step 1/1. Involved in the gluconeogenesis. Catalyzes stereospecifically the conversion of dihydroxyacetone phosphate (DHAP) to D-glyceraldehyde-3-phosphate (G3P). The sequence is that of Triosephosphate isomerase from Bartonella tribocorum (strain CIP 105476 / IBS 506).